A 441-amino-acid polypeptide reads, in one-letter code: Probable dihydroorotase-like protein (441 aa).

The segment at 121–140 (VNAHHQPPGDPQAENRPDSA) is disordered.

This sequence belongs to the metallo-dependent hydrolases superfamily. DHOase family. PyrC' subfamily.

In terms of biological role, non-functional DHOase. In Synechocystis sp. (strain ATCC 27184 / PCC 6803 / Kazusa), this protein is Probable dihydroorotase-like protein (pyrC').